Reading from the N-terminus, the 395-residue chain is MAFARAVRRPIGVFYYSVSSRFSSGNEYSTVASKFETLSQYKSSVPSGYTSLVRGFGNFIRSFSSEAPPAVSDQMSLIKQLRERTSAPIKDVKASLVECNWDLEAAQKDLRKRGKVLASKKSSRTAAEGMLAVAQNEGKVAVIELNCETDFVARNEIFQYLALAMAKHALLVESSSQQVSGVFPFGPELFEEFKLNLDHPKVNGETTVSNAVTEVAAIMGENVKFRRGFLMSKSSAGVLSAYLHTSPQPGLGRIAGIVSLEVEGENTQLEAIQRVGSELAMHVVAAKPLFLSKDLVSSEAMANEREILKSQAESTGKNQMAIEKIVEGRLRKYFEEVALMEQKFIVNDAINIKTLVDNLSKEVGSPVKVTDFLRVEVGEGIERLEASDEPVAQTA.

A mitochondrion-targeting transit peptide spans Met1–Phe63.

The protein belongs to the EF-Ts family.

It localises to the mitochondrion. In terms of biological role, associates with the EF-Tu.GDP complex and induces the exchange of GDP to GTP. It remains bound to the aminoacyl-tRNA.EF-Tu.GTP complex up to the GTP hydrolysis stage on the ribosome. This is Elongation factor Ts, mitochondrial from Arabidopsis thaliana (Mouse-ear cress).